Here is a 95-residue protein sequence, read N- to C-terminus: Aspartyl/glutamyl-tRNA(Asn/Gln) amidotransferase subunit C (95 aa).

It belongs to the GatC family. Heterotrimer of A, B and C subunits.

The catalysed reaction is L-glutamyl-tRNA(Gln) + L-glutamine + ATP + H2O = L-glutaminyl-tRNA(Gln) + L-glutamate + ADP + phosphate + H(+). It catalyses the reaction L-aspartyl-tRNA(Asn) + L-glutamine + ATP + H2O = L-asparaginyl-tRNA(Asn) + L-glutamate + ADP + phosphate + 2 H(+). Its function is as follows. Allows the formation of correctly charged Asn-tRNA(Asn) or Gln-tRNA(Gln) through the transamidation of misacylated Asp-tRNA(Asn) or Glu-tRNA(Gln) in organisms which lack either or both of asparaginyl-tRNA or glutaminyl-tRNA synthetases. The reaction takes place in the presence of glutamine and ATP through an activated phospho-Asp-tRNA(Asn) or phospho-Glu-tRNA(Gln). This Methylocella silvestris (strain DSM 15510 / CIP 108128 / LMG 27833 / NCIMB 13906 / BL2) protein is Aspartyl/glutamyl-tRNA(Asn/Gln) amidotransferase subunit C.